The sequence spans 307 residues: Oxygen-dependent coproporphyrinogen-III oxidase (307 aa).

Ser97 contributes to the substrate binding site. Positions 101 and 111 each coordinate a divalent metal cation. The active-site Proton donor is the His111. Asn113–Arg115 is a binding site for substrate. A divalent metal cation contacts are provided by His152 and His182. The segment at Tyr247–Ser282 is important for dimerization. Substrate is bound at residue Gly265 to Arg267.

It belongs to the aerobic coproporphyrinogen-III oxidase family. In terms of assembly, homodimer. A divalent metal cation serves as cofactor.

Its subcellular location is the cytoplasm. The catalysed reaction is coproporphyrinogen III + O2 + 2 H(+) = protoporphyrinogen IX + 2 CO2 + 2 H2O. Its pathway is porphyrin-containing compound metabolism; protoporphyrin-IX biosynthesis; protoporphyrinogen-IX from coproporphyrinogen-III (O2 route): step 1/1. In terms of biological role, involved in the heme biosynthesis. Catalyzes the aerobic oxidative decarboxylation of propionate groups of rings A and B of coproporphyrinogen-III to yield the vinyl groups in protoporphyrinogen-IX. The protein is Oxygen-dependent coproporphyrinogen-III oxidase of Polaromonas naphthalenivorans (strain CJ2).